Reading from the N-terminus, the 514-residue chain is 2,3-bisphosphoglycerate-independent phosphoglycerate mutase (514 aa).

Positions 13 and 63 each coordinate Mn(2+). Ser-63 (phosphoserine intermediate) is an active-site residue. Substrate is bound by residues His-124, 154–155, Arg-186, Arg-192, 258–261, and Lys-332; these read RD and RADR. Residues Asp-399, His-403, Asp-440, His-441, and His-459 each coordinate Mn(2+).

The protein belongs to the BPG-independent phosphoglycerate mutase family. Monomer. It depends on Mn(2+) as a cofactor.

The catalysed reaction is (2R)-2-phosphoglycerate = (2R)-3-phosphoglycerate. It participates in carbohydrate degradation; glycolysis; pyruvate from D-glyceraldehyde 3-phosphate: step 3/5. Functionally, catalyzes the interconversion of 2-phosphoglycerate and 3-phosphoglycerate. The chain is 2,3-bisphosphoglycerate-independent phosphoglycerate mutase from Legionella pneumophila subsp. pneumophila (strain Philadelphia 1 / ATCC 33152 / DSM 7513).